Reading from the N-terminus, the 451-residue chain is Spermidine sinapoyl-CoA acyltransferase (451 aa).

Spermidine-binding residues include Y47, H169, S294, D316, and L378. H169 serves as the catalytic Proton acceptor. D391 acts as the Proton acceptor in catalysis.

Belongs to the plant acyltransferase family. In terms of assembly, monomer. Predominantly expressed in siliques, especially in seeds around the embryo, and, at low levels, in flowers. Barely detectable in stems, leaves, and roots.

The catalysed reaction is 2 (E)-sinapoyl-CoA + spermidine = N(1),N(8)-bis[(E)-sinapoyl]-spermidine + 2 CoA + 2 H(+). It participates in amine and polyamine metabolism; spermidine metabolism. In terms of biological role, spermidine sinapoyl-CoA acyltransferase that mediates the accumulation of disinapoyl spermidine conjugates in seeds. Catalyzes the two conjugating steps required for the biosynthesis of N1,N8-disipanoyl-spermidine. Can also use putrescine as an acyl acceptor to convert it into monosinapoyl-putrescine. This is Spermidine sinapoyl-CoA acyltransferase from Arabidopsis thaliana (Mouse-ear cress).